The primary structure comprises 356 residues: UDP-3-O-acylglucosamine N-acyltransferase (356 aa).

H242 acts as the Proton acceptor in catalysis.

Belongs to the transferase hexapeptide repeat family. LpxD subfamily. In terms of assembly, homotrimer.

The catalysed reaction is a UDP-3-O-[(3R)-3-hydroxyacyl]-alpha-D-glucosamine + a (3R)-hydroxyacyl-[ACP] = a UDP-2-N,3-O-bis[(3R)-3-hydroxyacyl]-alpha-D-glucosamine + holo-[ACP] + H(+). It functions in the pathway bacterial outer membrane biogenesis; LPS lipid A biosynthesis. Its function is as follows. Catalyzes the N-acylation of UDP-3-O-acylglucosamine using 3-hydroxyacyl-ACP as the acyl donor. Is involved in the biosynthesis of lipid A, a phosphorylated glycolipid that anchors the lipopolysaccharide to the outer membrane of the cell. The chain is UDP-3-O-acylglucosamine N-acyltransferase from Acinetobacter baylyi (strain ATCC 33305 / BD413 / ADP1).